The primary structure comprises 136 residues: Acidic phospholipase A2 EC-I (136 aa).

A signal peptide spans Met-1 to Gly-16. Disulfide bonds link Cys-42/Cys-129, Cys-44/Cys-60, Cys-59/Cys-111, Cys-65/Cys-136, Cys-66/Cys-104, Cys-73/Cys-97, and Cys-91/Cys-102. Ca(2+)-binding residues include Tyr-43, Gly-45, and Gly-47. Residue His-63 is part of the active site. Asp-64 contributes to the Ca(2+) binding site. Asp-105 is a catalytic residue. Positions Leu-112–Val-133 are may be responsible for inhibition of the platelet-aggregation activity.

This sequence belongs to the phospholipase A2 family. Group II subfamily. D49 sub-subfamily. Monomer. The cofactor is Ca(2+). As to expression, expressed by the venom gland.

Its subcellular location is the secreted. The catalysed reaction is a 1,2-diacyl-sn-glycero-3-phosphocholine + H2O = a 1-acyl-sn-glycero-3-phosphocholine + a fatty acid + H(+). In terms of biological role, snake venom phospholipase A2 (PLA2) that inhibits human platelet aggregation induced by ADP, collagen and epinephrin (possibly by binding the platelet receptor alpha-IIb/beta-III) and induces mild edema in the foot pads of mice. PLA2 catalyzes the calcium-dependent hydrolysis of the 2-acyl groups in 3-sn-phosphoglycerides. The protein is Acidic phospholipase A2 EC-I of Echis carinatus (Saw-scaled viper).